Here is a 1049-residue protein sequence, read N- to C-terminus: Protein argonaute 12 (1049 aa).

Gly residues predominate over residues 1-53 (MSSRGGGGGGRRGGRGGGGGREGGGGGGGGGGRGGQGRGDLGVVGERQGGGRG). Disordered stretches follow at residues 1–101 (MSSR…GVQV) and 144–192 (GGAP…KAVT). A compositionally biased stretch (basic and acidic residues) spans 54 to 65 (AGERGGRHDAPR). Over residues 66-76 (GRGGVAVGAGA) the composition is skewed to gly residues. The segment covering 144–160 (GGAPPAGQGSSLAAAQG) has biased composition (low complexity). A PAZ domain is found at 404-515 (PVMDFAVQYL…LPMEVCSILE (112 aa)). In terms of domain architecture, Piwi spans 694–1012 (LLIVILTEIS…GAFRARYYME (319 aa)).

It belongs to the argonaute family. Ago subfamily.

Functionally, probably involved in the RNA silencing pathway. May bind to short RNAs such as microRNAs (miRNAs) or short interfering RNAs (siRNAs), and represses the translation of mRNAs which are complementary to them. In Oryza sativa subsp. japonica (Rice), this protein is Protein argonaute 12 (AGO12).